A 354-amino-acid polypeptide reads, in one-letter code: 3-dehydroquinate synthase (354 aa).

Residues 100 to 104 (GATGD), 124 to 125 (TT), K136, K145, and 163 to 166 (FLKT) each bind NAD(+). Residues E178, H242, and H256 each coordinate Zn(2+).

It belongs to the sugar phosphate cyclases superfamily. Dehydroquinate synthase family. Co(2+) is required as a cofactor. The cofactor is Zn(2+). NAD(+) serves as cofactor.

It localises to the cytoplasm. It catalyses the reaction 7-phospho-2-dehydro-3-deoxy-D-arabino-heptonate = 3-dehydroquinate + phosphate. It participates in metabolic intermediate biosynthesis; chorismate biosynthesis; chorismate from D-erythrose 4-phosphate and phosphoenolpyruvate: step 2/7. Its function is as follows. Catalyzes the conversion of 3-deoxy-D-arabino-heptulosonate 7-phosphate (DAHP) to dehydroquinate (DHQ). The polypeptide is 3-dehydroquinate synthase (Staphylococcus aureus (strain NCTC 8325 / PS 47)).